Reading from the N-terminus, the 233-residue chain is Putative 26S proteasome non-ATPase regulatory subunit 8 homolog B (233 aa).

An N-acetylmethionine modification is found at Met-1. Positions 38 to 217 (DHYLISLSLN…APCKEIPSLQ (180 aa)) constitute a PCI domain.

It belongs to the proteasome subunit S14 family. In terms of assembly, component of the 19S regulatory particle (RP/PA700) lid subcomplex of the 26S proteasome. The 26S proteasome is composed of a core protease (CP), known as the 20S proteasome, capped at one or both ends by the 19S regulatory particle (RP/PA700). The RP/PA700 complex is composed of at least 17 different subunits in two subcomplexes, the base and the lid, which form the portions proximal and distal to the 20S proteolytic core, respectively. Interacts with UCH1 and UCH2.

In terms of biological role, acts as a regulatory subunit of the 26S proteasome which is involved in the ATP-dependent degradation of ubiquitinated proteins. The chain is Putative 26S proteasome non-ATPase regulatory subunit 8 homolog B from Arabidopsis thaliana (Mouse-ear cress).